The primary structure comprises 490 residues: Cytochrome P450 2C14 (490 aa).

Residue cysteine 435 coordinates heme.

It belongs to the cytochrome P450 family. Requires heme as cofactor.

It localises to the endoplasmic reticulum membrane. Its subcellular location is the microsome membrane. The enzyme catalyses an organic molecule + reduced [NADPH--hemoprotein reductase] + O2 = an alcohol + oxidized [NADPH--hemoprotein reductase] + H2O + H(+). Its function is as follows. Cytochromes P450 are a group of heme-thiolate monooxygenases. In liver microsomes, this enzyme is involved in an NADPH-dependent electron transport pathway. It oxidizes a variety of structurally unrelated compounds, including steroids, fatty acids, and xenobiotics. This Oryctolagus cuniculus (Rabbit) protein is Cytochrome P450 2C14 (CYP2C14).